Consider the following 740-residue polypeptide: Ion-translocating oxidoreductase complex subunit C (740 aa).

2 4Fe-4S ferredoxin-type domains span residues 369-397 and 407-436; these read GEPQEEQSCIRCSACADACPADLLPQQLY and KATTHNIADCIECGACAWVCPSNIPLVQYF. [4Fe-4S] cluster is bound by residues C377, C380, C383, C387, C416, C419, C422, and C426. Disordered stretches follow at residues 602–621 and 660–718; these read KLEQQQANAKPEEQVDPRKA and ARAK…RKAA. Residues 611–621 show a composition bias toward basic and acidic residues; sequence KPEEQVDPRKA.

It belongs to the 4Fe4S bacterial-type ferredoxin family. RnfC subfamily. As to quaternary structure, the complex is composed of six subunits: RsxA, RsxB, RsxC, RsxD, RsxE and RsxG. It depends on [4Fe-4S] cluster as a cofactor.

The protein localises to the cell inner membrane. Functionally, part of a membrane-bound complex that couples electron transfer with translocation of ions across the membrane. Required to maintain the reduced state of SoxR. This is Ion-translocating oxidoreductase complex subunit C from Escherichia coli O9:H4 (strain HS).